Here is a 355-residue protein sequence, read N- to C-terminus: Glutamine synthetase root isozyme 4 (355 aa).

The 81-residue stretch at 19–99 folds into the GS beta-grasp domain; the sequence is IIAEYIWIGG…VMCDCYTPAG (81 aa). A disordered region spans residues 37–66; that stretch reads ARTLPGPVTDPSKLPKWNYDGSSTGQAPGE. The 250-residue stretch at 106 to 355 folds into the GS catalytic domain; the sequence is KRYSAAKIFS…IAETTIVWKP (250 aa).

Belongs to the glutamine synthetase family. As to quaternary structure, homooctamer. In terms of tissue distribution, found in all the tissues examined with higher expression found in tissues of the root, stem and seedling shoot.

The protein localises to the cytoplasm. It catalyses the reaction L-glutamate + NH4(+) + ATP = L-glutamine + ADP + phosphate + H(+). Functionally, plays a role in the flow of nitrogen into nitrogenous organic compounds. The sequence is that of Glutamine synthetase root isozyme 4 (GLN5) from Zea mays (Maize).